The chain runs to 318 residues: Methionine import ATP-binding protein MetN (318 aa).

One can recognise an ABC transporter domain in the interval 2 to 237 (IEIKDVGKIF…PEGELKKIIE (236 aa)). 34–41 (GRSGAGKS) is an ATP binding site.

This sequence belongs to the ABC transporter superfamily. Methionine importer (TC 3.A.1.24) family. The complex is composed of two ATP-binding proteins (MetN), two transmembrane proteins (MetI) and a solute-binding protein (MetQ).

It is found in the cell membrane. The catalysed reaction is L-methionine(out) + ATP + H2O = L-methionine(in) + ADP + phosphate + H(+). It catalyses the reaction D-methionine(out) + ATP + H2O = D-methionine(in) + ADP + phosphate + H(+). Functionally, part of the ABC transporter complex MetNIQ involved in methionine import. Responsible for energy coupling to the transport system. This chain is Methionine import ATP-binding protein MetN, found in Clostridium tetani (strain Massachusetts / E88).